The sequence spans 745 residues: Catalase-peroxidase (745 aa).

Residues 97-223 constitute a cross-link (tryptophyl-tyrosyl-methioninium (Trp-Tyr) (with M-249)); the sequence is WHSAGTYRTG…LAAVQMGLIY (127 aa). The Proton acceptor role is filled by histidine 98. The tryptophyl-tyrosyl-methioninium (Tyr-Met) (with W-97) cross-link spans 223–249; it reads YVNPEGPDGSPDPWASARDIRMTFARM. Histidine 264 contributes to the heme b binding site. Residues 345 to 368 form a disordered region; that stretch reads KQWQPVNPKPEDLAPGAHSPDRRV.

The protein belongs to the peroxidase family. Peroxidase/catalase subfamily. In terms of assembly, homodimer or homotetramer. It depends on heme b as a cofactor. Formation of the three residue Trp-Tyr-Met cross-link is important for the catalase, but not the peroxidase activity of the enzyme.

It catalyses the reaction H2O2 + AH2 = A + 2 H2O. The enzyme catalyses 2 H2O2 = O2 + 2 H2O. In terms of biological role, bifunctional enzyme with both catalase and broad-spectrum peroxidase activity. The sequence is that of Catalase-peroxidase from Phenylobacterium zucineum (strain HLK1).